The sequence spans 433 residues: Protein arginine N-methyltransferase 2 (433 aa).

The interval 1 to 20 is disordered; that stretch reads MATSGDCPRSESQGEEPAEC. Interaction with ESR1 stretches follow at residues 1-277 and 133-275; these read MATS…SALK and KESL…NLSA. An SH3 domain is found at 30–89; sequence VQPEEFVAIADYAATDETQLSFLRGEKILILRQTTADWWWGERAGCCGYIPANHVGKHVD. Arg61 and Arg72 each carry asymmetric dimethylarginine. Residues 83–207 are interaction with RB1; it reads HVGKHVDEYD…DVVLPEKVDV (125 aa). The SAM-dependent MTase PRMT-type domain maps to 99-432; it reads DEEYFGSYGT…KVGEKVFPIW (334 aa). S-adenosyl-L-methionine is bound by residues His112, Arg121, Gly145, Glu168, and Glu197. Active-site residues include Glu211 and Glu220.

It belongs to the class I-like SAM-binding methyltransferase superfamily. Protein arginine N-methyltransferase family. As to quaternary structure, self-associates. Interacts with RB1 and E2F1. Interacts with NCOA6 coactivator. Interacts (via SH3 domain) with PRMT8. Interacts with AR. Interacts with NFKBIA. Interacts with ESR1, ESR2, PGR, PPARG, RARA, RXRA and THRB. Interacts with HNRNPUL1. Widely expressed. Highly expressed in androgen target organs such as heart, prostate, skeletal muscle, ovary and spinal cord.

The protein resides in the cytoplasm. It is found in the nucleus. Its subcellular location is the nucleolus. It carries out the reaction L-arginyl-[protein] + 2 S-adenosyl-L-methionine = N(omega),N(omega)-dimethyl-L-arginyl-[protein] + 2 S-adenosyl-L-homocysteine + 2 H(+). Functionally, arginine methyltransferase that methylates the guanidino nitrogens of arginyl residues in proteins such as STAT3, FBL, histone H4. Acts as a coactivator (with NCOA2) of the androgen receptor (AR)-mediated transactivation. Acts as a coactivator (with estrogen) of estrogen receptor (ER)-mediated transactivation. Enhances PGR, PPARG, RARA-mediated transactivation. May inhibit NF-kappa-B transcription and promote apoptosis. Represses E2F1 transcriptional activity (in a RB1-dependent manner). May be involved in growth regulation. The polypeptide is Protein arginine N-methyltransferase 2 (PRMT2) (Homo sapiens (Human)).